The chain runs to 221 residues: GTP-binding nuclear protein Ran-A1 (221 aa).

One can recognise a Small GTPase Ran-type domain in the interval 10–174; it reads DYPSFKLVIV…LYLARKLAGD (165 aa). 21 to 28 provides a ligand contact to GTP; that stretch reads DGGTGKTT. The segment at 40 to 48 is switch-I; sequence KKYEPTIGV. GTP-binding positions include G71, 125–128, and 153–155; these read NKVD and SAK. The segment at 71-87 is switch-II; it reads GQEKFGGLRDGYYIHGQ. Positions 199–208 are enriched in low complexity; the sequence is QHEAELAAAA. A disordered region spans residues 199–221; the sequence is QHEAELAAAASQPLPDDDDETFD.

The protein belongs to the small GTPase superfamily. Ran family. In terms of assembly, found in a nuclear export complex with RanGTP, exportin and pre-miRNA.

Its subcellular location is the nucleus. Its function is as follows. GTP-binding protein involved in nucleocytoplasmic transport. Required for the import of protein into the nucleus and also for RNA export. Involved in chromatin condensation and control of cell cycle. This is GTP-binding nuclear protein Ran-A1 (RAN-A1) from Nicotiana tabacum (Common tobacco).